Reading from the N-terminus, the 893-residue chain is Sperm-associated antigen 1 (893 aa).

Positions 112-126 (ENTRHFHDPEKHPGV) are enriched in basic and acidic residues. The interval 112-155 (ENTRHFHDPEKHPGVEDPLPPVRGSNSCPRGGKETSSKSKTAKK) is disordered. TPR repeat units lie at residues 213–246 (ANRE…LPTA), 247–279 (TAYN…EPGN), and 280–313 (IKAL…EPDN). Disordered regions lie at residues 324–344 (EREL…KRMV), 349–368 (ENSG…DDGV), and 373–437 (MGNI…SRGN). Residue S351 is modified to Phosphoserine. Over residues 403–415 (QEGQPETGTASTS) the composition is skewed to polar residues. Positions 416-437 (DNHDLEERRAADSPGDLKSRGN) are enriched in basic and acidic residues. TPR repeat units lie at residues 429 to 463 (PGDL…EPTG), 471 to 504 (SILY…QPFA), 506 to 538 (KPLL…DCRI), 605 to 638 (FQAL…NSKA), and 639 to 672 (CAIY…DSKN). 630-637 (ECLKINSK) is a GTP binding site. At S703 the chain carries Phosphoserine. The interval 704-756 (PDSSEAARHLDTKNDTAPPSRERERRRIEIQEVDDSSDEEPERPAEASAVEEG) is disordered. A compositionally biased stretch (basic and acidic residues) spans 708–733 (EAARHLDTKNDTAPPSRERERRRIEI). Residues 734 to 744 (QEVDDSSDEEP) show a composition bias toward acidic residues. S739, S740, and S758 each carry phosphoserine.

As to expression, testis and sperm.

It is found in the cytoplasm. It localises to the dynein axonemal particle. May play a role in the cytoplasmic assembly of the ciliary dynein arms. Binds GTP and has GTPase activity. Plays a role in fertilization. This is Sperm-associated antigen 1 (Spag1) from Rattus norvegicus (Rat).